Reading from the N-terminus, the 262-residue chain is 7alpha-hydroxysteroid dehydrogenase (262 aa).

NADP(+) is bound by residues 13–18 (SSTRGI), arginine 38, 63–64 (NA), and asparagine 90. Residues threonine 145 and tyrosine 158 each coordinate taurochenodeoxycholate. NADP(+) is bound by residues tyrosine 158, lysine 162, and 191 to 195 (IGTRA). Tyrosine 158 serves as the catalytic Proton acceptor.

It belongs to the short-chain dehydrogenases/reductases (SDR) family. Homotetramer. A dynamic equilibrium between dimers and tetramers seems to exist.

The catalysed reaction is cholate + NADP(+) = 3alpha,12alpha-dihydroxy-7-oxo-5beta-cholanate + NADPH + H(+). It catalyses the reaction chenodeoxycholate + NADP(+) = 7-oxolithocholate + NADPH + H(+). It carries out the reaction 3alpha,7alpha-dihydroxy-12-oxo-5beta-cholanate + NADP(+) = 7,12-dioxo-lithocholate + NADPH + H(+). The enzyme catalyses 7alpha-hydroxy-3,12-dioxo-5beta-cholanate + NADP(+) = dehydrocholate + NADPH + H(+). The catalysed reaction is glycochenodeoxycholate + NADP(+) = 7-oxoglycolithocholate + NADPH + H(+). It catalyses the reaction taurochenodeoxycholate + NADP(+) = 7-oxotaurolithocholate + NADPH + H(+). With respect to regulation, activated by metal ions such as Mg(2+), Na(+) and K(+). 7alpha-hydroxysteroid dehydrogenase that catalyzes the NADP(+)-dependent oxidation of the 7alpha-hydroxy group of 7alpha-hydroxysteroids, such as cholate, chenodeoxycholate, glycochenodeoxycholate and taurochenodeoxycholate, to the corresponding 7-oxosteroids. Is also able to catalyze the reverse reduction reactions. Together with 7beta-HSDH encoded in the adjacent gene, is likely involved in the epimerization of the hydroxy group at C-7 of primary bile acids through 7-keto bile acid intermediates. The sequence is that of 7alpha-hydroxysteroid dehydrogenase from Clostridium sardiniense (Clostridium absonum).